Reading from the N-terminus, the 238-residue chain is Aliphatic sulfonates import ATP-binding protein SsuB (238 aa).

The region spanning 7 to 221 (VSLHQVHQQF…RPGDAAFASL (215 aa)) is the ABC transporter domain. Residue 39-46 (GRSGSGKT) coordinates ATP.

Belongs to the ABC transporter superfamily. Aliphatic sulfonates importer (TC 3.A.1.17.2) family. As to quaternary structure, the complex is composed of two ATP-binding proteins (SsuB), two transmembrane proteins (SsuC) and a solute-binding protein (SsuA).

It is found in the cell inner membrane. It catalyses the reaction ATP + H2O + aliphatic sulfonate-[sulfonate-binding protein]Side 1 = ADP + phosphate + aliphatic sulfonateSide 2 + [sulfonate-binding protein]Side 1.. Its function is as follows. Part of the ABC transporter complex SsuABC involved in aliphatic sulfonates import. Responsible for energy coupling to the transport system. The sequence is that of Aliphatic sulfonates import ATP-binding protein SsuB from Granulibacter bethesdensis (strain ATCC BAA-1260 / CGDNIH1).